The primary structure comprises 168 residues: 2-C-methyl-D-erythritol 2,4-cyclodiphosphate synthase (168 aa).

A divalent metal cation contacts are provided by aspartate 11 and histidine 13. 4-CDP-2-C-methyl-D-erythritol 2-phosphate contacts are provided by residues 11–13 (DVH) and 38–39 (HS). Position 46 (histidine 46) interacts with a divalent metal cation. 4-CDP-2-C-methyl-D-erythritol 2-phosphate contacts are provided by residues 60–62 (DIG), 133–136 (TTTD), phenylalanine 140, and arginine 143.

It belongs to the IspF family. Homotrimer. A divalent metal cation serves as cofactor.

It carries out the reaction 4-CDP-2-C-methyl-D-erythritol 2-phosphate = 2-C-methyl-D-erythritol 2,4-cyclic diphosphate + CMP. The protein operates within isoprenoid biosynthesis; isopentenyl diphosphate biosynthesis via DXP pathway; isopentenyl diphosphate from 1-deoxy-D-xylulose 5-phosphate: step 4/6. Its function is as follows. Involved in the biosynthesis of isopentenyl diphosphate (IPP) and dimethylallyl diphosphate (DMAPP), two major building blocks of isoprenoid compounds. Catalyzes the conversion of 4-diphosphocytidyl-2-C-methyl-D-erythritol 2-phosphate (CDP-ME2P) to 2-C-methyl-D-erythritol 2,4-cyclodiphosphate (ME-CPP) with a corresponding release of cytidine 5-monophosphate (CMP). This chain is 2-C-methyl-D-erythritol 2,4-cyclodiphosphate synthase, found in Cutibacterium acnes (strain DSM 16379 / KPA171202) (Propionibacterium acnes).